We begin with the raw amino-acid sequence, 807 residues long: F-box protein YLR352W (807 aa).

The F-box domain occupies Leu220–Leu266. Over residues Asp607 to Gln616 the composition is skewed to basic and acidic residues. Disordered stretches follow at residues Asp607 to Ala647 and His716 to Ser739. Composition is skewed to polar residues over residues Ser627–Asn644 and Ser723–Glu736.

As to quaternary structure, interacts with SKP1 and CDC53. Component of the probable SCF(YBR352W) complex containing CDC53, SKP1, RBX1 and YBR352W.

It functions in the pathway protein modification; protein ubiquitination. In terms of biological role, substrate recognition component of a SCF (SKP1-CUL1-F-box protein) E3 ubiquitin-protein ligase complex which mediates the ubiquitination and subsequent proteasomal degradation of target proteins. Probably recognizes and binds to phosphorylated target proteins. This chain is F-box protein YLR352W, found in Saccharomyces cerevisiae (strain ATCC 204508 / S288c) (Baker's yeast).